The chain runs to 407 residues: Wilms tumor protein homolog B (407 aa).

Glycyl lysine isopeptide (Lys-Gly) (interchain with G-Cter in SUMO) cross-links involve residues K55 and K158. A 9aaTAD motif is present at residues 213–221 (MTWNQMNLG). 4 consecutive C2H2-type zinc fingers follow at residues 284–308 (FMCAYPGCNKRYFKLSHLQMHSRKH), 314–338 (YQCDFKDCERRFSRSDQLKRHQRRH), 344–366 (FQCKTCQRKFSRSDHLKTHTRTH), and 372–396 (FSCRWPSCQKKFARSDELVRHHNMH). Important for interaction with target DNA stretches follow at residues 328-342 (SDQLKRHQRRHTGVK) and 354-362 (SRSDHLKTH).

The protein belongs to the EGR C2H2-type zinc-finger protein family. In terms of tissue distribution, expressed in the pronephric anlage from stage 23 to 30. Also expressed in the adult kidney (mesonephros) and in testis.

The protein resides in the nucleus. Its subcellular location is the cytoplasm. It localises to the nucleus speckle. Functionally, transcription factor required for development of the vascular component of the pronephric kidney, the glomus; may repress tubule-specific gene expression in the portion of the pronephros fated to form the glomus. Recognizes and binds to the DNA sequence 5'-GCG(T/G)GGGCG-3'. Inhibits Wnt-signaling during embryonic development. This Xenopus laevis (African clawed frog) protein is Wilms tumor protein homolog B (wt1-b).